Here is a 490-residue protein sequence, read N- to C-terminus: Katanin p60 ATPase-containing subunit A-like 1 (490 aa).

M1 is subject to N-acetylmethionine. A disordered region spans residues 95-178 (DPAVWPPPVP…MQDGASDGDI (84 aa)). The segment covering 116 to 127 (PNREVRPLRKDV) has biased composition (basic and acidic residues). Low complexity predominate over residues 128–139 (AGVGARGPVGRA). Positions 143-169 (SKSEKPSTNKDKDYRARGRDDKGRKNM) are enriched in basic and acidic residues. S174 carries the post-translational modification Phosphoserine. 248–255 (GPPGTGKT) serves as a coordination point for ATP.

The protein belongs to the AAA ATPase family. Katanin p60 subunit A1 subfamily. A-like 1 sub-subfamily. In terms of assembly, interacts with KATNB1 and KATNBL1.

It localises to the cytoplasm. The protein localises to the cytoskeleton. Its subcellular location is the spindle pole. The protein resides in the spindle. It catalyses the reaction n ATP + n H2O + a microtubule = n ADP + n phosphate + (n+1) alpha/beta tubulin heterodimers.. Functionally, regulates microtubule dynamics in Sertoli cells, a process that is essential for spermiogenesis and male fertility. Severs microtubules in an ATP-dependent manner, promoting rapid reorganization of cellular microtubule arrays. Has microtubule-severing activity in vitro. The protein is Katanin p60 ATPase-containing subunit A-like 1 of Sorex araneus (Eurasian common shrew).